We begin with the raw amino-acid sequence, 473 residues long: Thermostable beta-glucosidase B (473 aa).

The Proton donor role is filled by E196. E378 serves as the catalytic Nucleophile.

It belongs to the glycosyl hydrolase 1 family.

The protein localises to the cytoplasm. The enzyme catalyses Hydrolysis of terminal, non-reducing beta-D-glucosyl residues with release of beta-D-glucose.. This chain is Thermostable beta-glucosidase B (bglB), found in Thermobispora bispora (Microbispora bispora).